The following is a 224-amino-acid chain: uncharacterized protein (224 aa).

Residues 1-23 (MKKLLAAGIIGLLTVSIASPSFA) form the signal peptide. Residues 31–224 (NVAVLFDGSG…WEKEAQKFTE (194 aa)) enclose the VWFA domain.

To B.subtilis YwmC.

This is an uncharacterized protein from Bacillus subtilis (strain 168).